Here is a 338-residue protein sequence, read N- to C-terminus: Phytanoyl-CoA dioxygenase, peroxisomal (338 aa).

A peroxisome-targeting transit peptide spans 1–30 (MDYTRAGARLQVLLGHLGRPSALQIVAHPV). Residues K59 and K108 each carry the N6-succinyllysine modification. 2-oxoglutarate-binding positions include K120, M157, 175 to 177 (HQD), and W193. Fe cation is bound by residues H175 and D177. An N6-succinyllysine mark is found at K231 and K252. H264 is a binding site for Fe cation. The 2-oxoglutarate site is built by S266 and R275.

It belongs to the PhyH family. Interacts specifically with FKBP52 and PHYHIP. The cofactor is Fe cation. L-ascorbate is required as a cofactor. Requires ATP as cofactor. It depends on Mg(2+) as a cofactor.

The protein resides in the peroxisome. It catalyses the reaction phytanoyl-CoA + 2-oxoglutarate + O2 = 2-hydroxyphytanoyl-CoA + succinate + CO2. It carries out the reaction 3-methylhexadecanoyl-CoA + 2-oxoglutarate + O2 = 2-hydroxy-3-methylhexadecanoyl-CoA + succinate + CO2. The catalysed reaction is hexadecanoyl-CoA + 2-oxoglutarate + O2 = 2-hydroxyhexadecanoyl-CoA + succinate + CO2. The enzyme catalyses octanoyl-CoA + 2-oxoglutarate + O2 = 2-hydroxyoctanoyl-CoA + succinate + CO2. It catalyses the reaction decanoyl-CoA + 2-oxoglutarate + O2 = 2-hydroxydecanoyl-CoA + succinate + CO2. It carries out the reaction 3-methylbutanoyl-CoA + 2-oxoglutarate + O2 = 2-hydroxy-3-methylbutanoyl-CoA + succinate + CO2. The catalysed reaction is heptadecanoyl-CoA + 2-oxoglutarate + O2 = 2-hydroxyheptadecanoyl-CoA + succinate + CO2. The enzyme catalyses eicosanoyl-CoA + 2-oxoglutarate + O2 = 2-hydroxyeicosanoyl-CoA + succinate + CO2. It catalyses the reaction octadecanoyl-CoA + 2-oxoglutarate + O2 = 2-hydroxyoctadecanoyl-CoA + succinate + CO2. It carries out the reaction dodecanoyl-CoA + 2-oxoglutarate + O2 = 2-hydroxydodecanoyl-CoA + succinate + CO2. The catalysed reaction is tetradecanoyl-CoA + 2-oxoglutarate + O2 = 2-hydroxytetradecanoyl-CoA + succinate + CO2. The enzyme catalyses hexanoyl-CoA + 2-oxoglutarate + O2 = 2-hydroxyhexanoyl-CoA + succinate + CO2. It catalyses the reaction butanoyl-CoA + 2-oxoglutarate + O2 = 2-hydroxybutanoyl-CoA + succinate + CO2. It carries out the reaction 3-methylnonanoyl-CoA + 2-oxoglutarate + O2 = 2-hydroxy-3-methylnonanoyl-CoA + succinate + CO2. The catalysed reaction is 3-methylundecanoyl-CoA + 2-oxoglutarate + O2 = 2-hydroxy-3-methylundecanoyl-CoA + succinate + CO2. The enzyme catalyses 3-methyldodecanoyl-CoA + 2-oxoglutarate + O2 = 2-hydroxy-3-methyldodecanoyl-CoA + succinate + CO2. Its pathway is lipid metabolism; fatty acid metabolism. Catalyzes the 2-hydroxylation of racemic phytanoyl-CoA and the isomers of 3-methylhexadecanoyl-CoA. Shows activity also towards a variety of other mono-branched 3-methylacyl-CoA esters (with a chain length of at least seven carbon atoms) and straight-chain acyl-CoA esters (with a chain length longer than four carbon atoms). Does not hydroxylate long and very long straight chain acyl-CoAs or 2-methyl-and 4-methyl-branched acyl-CoAs. The chain is Phytanoyl-CoA dioxygenase, peroxisomal (Phyh) from Rattus norvegicus (Rat).